A 261-amino-acid polypeptide reads, in one-letter code: Cell division protein B (261 aa).

The interval 213-261 (SEDMILNYIKTTGGFIDVDYIAKNFDVSKDEVFNVLRRLEEKGLIVLEG) is winged-helix-like fold.

In terms of assembly, interacts with CdvA. Interacts with CdvC.

The protein localises to the cytoplasm. The protein resides in the nucleoid. In terms of biological role, part of a cell division machinery. The CdvA, CdvB and CdvC proteins polymerize between segregating nucleoids and persist throughout cell division, forming a successively smaller structure during constriction. This chain is Cell division protein B, found in Sulfolobus acidocaldarius (strain ATCC 33909 / DSM 639 / JCM 8929 / NBRC 15157 / NCIMB 11770).